We begin with the raw amino-acid sequence, 192 residues long: uncharacterized protein (192 aa).

The Nudix hydrolase domain occupies 29 to 160; sequence QRQAAVLVPI…PLDIHRRGND (132 aa). Residues 67–89 carry the Nudix box motif; the sequence is GAVDNTDATLIAAALREAQEEVA. Mg(2+) contacts are provided by glutamate 83 and glutamate 87.

It belongs to the Nudix hydrolase family. PCD1 subfamily. Mn(2+) serves as cofactor. Requires Mg(2+) as cofactor.

In terms of biological role, probably mediates the hydrolysis of some nucleoside diphosphate derivatives. This is an uncharacterized protein from Klebsiella pneumoniae subsp. pneumoniae (strain ATCC 700721 / MGH 78578).